The following is a 235-amino-acid chain: Probable pyridoxal 5'-phosphate synthase subunit PDX1 (235 aa).

Lys16 functions as the Schiff-base intermediate with D-ribose 5-phosphate in the catalytic mechanism. Arg104 contacts D-glyceraldehyde 3-phosphate. D-ribose 5-phosphate-binding positions include Gly153 and 174 to 175 (GS).

It belongs to the PdxS/SNZ family.

It carries out the reaction aldehydo-D-ribose 5-phosphate + D-glyceraldehyde 3-phosphate + L-glutamine = pyridoxal 5'-phosphate + L-glutamate + phosphate + 3 H2O + H(+). The protein operates within cofactor biosynthesis; pyridoxal 5'-phosphate biosynthesis. In terms of biological role, catalyzes the formation of pyridoxal 5'-phosphate from ribose 5-phosphate (RBP), glyceraldehyde 3-phosphate (G3P) and ammonia. The ammonia is provided by PDX2. Can also use ribulose 5-phosphate and dihydroxyacetone phosphate as substrates, resulting from enzyme-catalyzed isomerization of RBP and G3P, respectively. Also plays an indirect role in resistance to singlet oxygen-generating photosensitizers. The polypeptide is Probable pyridoxal 5'-phosphate synthase subunit PDX1 (Stellaria longipes (Longstalk starwort)).